We begin with the raw amino-acid sequence, 517 residues long: Tyrosine-protein kinase Fgr (517 aa).

G2 carries N-myristoyl glycine lipidation. Residues C3 and C6 are each lipidated (S-palmitoyl cysteine). A compositionally biased stretch (basic and acidic residues) spans 17-33 (VGLEGDFRSQGAEERYY). Residues 17–46 (VGLEGDFRSQGAEERYYPDPTQGRSSSISP) are disordered. A Phosphotyrosine modification is found at Y32. Residue S50 is modified to Phosphoserine. The region spanning 65–126 (TGVTIFVALY…PSNYVAPVDS (62 aa)) is the SH3 domain. The SH2 domain occupies 132 to 229 (WYFGKISRKD…GLCYLLTAPC (98 aa)). Position 196 is a phosphotyrosine (Y196). Residue S206 is modified to Phosphoserine. The 254-residue stretch at 251–504 (IALDRRLGTG…YLQSFLEDYF (254 aa)) folds into the Protein kinase domain. Residues 257–265 (LGTGCFGDV) and K279 each bind ATP. The Proton acceptor role is filled by D370. Y400 carries the phosphotyrosine; by autocatalysis modification. At Y511 the chain carries Phosphotyrosine; by SRC.

Belongs to the protein kinase superfamily. Tyr protein kinase family. SRC subfamily. As to quaternary structure, interacts with ITGB1, ITGB2, MS4A2/FCER1B and FCGR2. Interacts (via SH2 domain) with SYK (tyrosine phosphorylated). Interacts (via SH2 domain) with FLT3 (tyrosine phosphorylated). Interacts with PTK2/FAK1. Interacts (via SH2 domain) with HCLS1 (tyrosine phosphorylated by SYK). Interacts with SIRPA and PTPNS1. Interacts (not phosphorylated on tyrosine residues) with CBL; FGR tyrosine phosphorylation promotes dissociation. Interacts with CLNK. Post-translationally, ubiquitinated. Becomes ubiquitinated in response to ITGB2 signaling; this does not lead to degradation. In terms of processing, phosphorylated. Autophosphorylated on tyrosine residues. Becomes phosphorylated in response to FCGR2 engagement, cell adhesion and signaling by ITGB2. Prior phosphorylation at Tyr-511 by SRC inhibits ulterior autophosphorylation at Tyr-400. Detected in brain cortex (at protein level).

It is found in the cell membrane. It localises to the cell projection. Its subcellular location is the ruffle membrane. The protein resides in the cytoplasm. The protein localises to the cytosol. It is found in the cytoskeleton. It localises to the mitochondrion inner membrane. Its subcellular location is the mitochondrion intermembrane space. The catalysed reaction is L-tyrosyl-[protein] + ATP = O-phospho-L-tyrosyl-[protein] + ADP + H(+). With respect to regulation, activated by autophosphorylation. Prior phosphorylation at Tyr-511 by SRC inhibits ulterior autophosphorylation at Tyr-400. Activated by phorbol myristate acetate, phosphatidic acid and poly-Lys. Binding (via SH2 domain) of HCLS1 that is already phosphorylated by SYK strongly increases kinase activity. Functionally, non-receptor tyrosine-protein kinase that transmits signals from cell surface receptors devoid of kinase activity and contributes to the regulation of immune responses, including neutrophil, monocyte, macrophage and mast cell functions, cytoskeleton remodeling in response to extracellular stimuli, phagocytosis, cell adhesion and migration. Promotes mast cell degranulation, release of inflammatory cytokines and IgE-mediated anaphylaxis. Acts downstream of receptors that bind the Fc region of immunoglobulins, such as MS4A2/FCER1B, FCER1G and FCGR2. Acts downstream of ITGB1 and ITGB2, and regulates actin cytoskeleton reorganization, cell spreading and adhesion. Depending on the context, activates or inhibits cellular responses. Functions as a negative regulator of ITGB2 signaling, phagocytosis and SYK activity in monocytes. Required for normal ITGB1 and ITGB2 signaling, normal cell spreading and adhesion in neutrophils and macrophages. Functions as a positive regulator of cell migration and regulates cytoskeleton reorganization via RAC1 activation. Phosphorylates SYK (in vitro) and promotes SYK-dependent activation of AKT1 and MAP kinase signaling. Phosphorylates PLD2 in antigen-stimulated mast cells, leading to PLD2 activation and the production of the signaling molecules lysophosphatidic acid and diacylglycerol. Promotes activation of PIK3R1. Phosphorylates FASLG, and thereby regulates its ubiquitination and subsequent internalization. Phosphorylates ABL1. Promotes phosphorylation of CBL, CTTN, PIK3R1, PTK2/FAK1, PTK2B/PYK2 and VAV2. Phosphorylates HCLS1 that has already been phosphorylated by SYK, but not unphosphorylated HCLS1. Together with CLNK, it acts as a negative regulator of natural killer cell-activating receptors and inhibits interferon-gamma production. The chain is Tyrosine-protein kinase Fgr (Fgr) from Rattus norvegicus (Rat).